Reading from the N-terminus, the 142-residue chain is MATQAVQVFGKKKNATAVARCVQGKGLIKVNGVPLKLYAPEILRAKLYEPILLLGTDKFAEVDIRLKVSGGGHVSQVYAVRQAIAKAIVAYYAKYVDEHSKNTLKTALIQFDRTLLVADPRRCEPKKFGGKGARSRFQKSYR.

The protein belongs to the universal ribosomal protein uS9 family. Component of the small ribosomal subunit (SSU). Mature N.crassa ribosomes consist of a small (40S) and a large (60S) subunit. The 40S small subunit contains 1 molecule of ribosomal RNA (18S rRNA) and at least 32 different proteins. The large 60S subunit contains 3 rRNA molecules (26S, 5.8S and 5S rRNA) and at least 42 different proteins.

The protein resides in the cytoplasm. Functionally, component of the ribosome, a large ribonucleoprotein complex responsible for the synthesis of proteins in the cell. The small ribosomal subunit (SSU) binds messenger RNAs (mRNAs) and translates the encoded message by selecting cognate aminoacyl-transfer RNA (tRNA) molecules. The large subunit (LSU) contains the ribosomal catalytic site termed the peptidyl transferase center (PTC), which catalyzes the formation of peptide bonds, thereby polymerizing the amino acids delivered by tRNAs into a polypeptide chain. The nascent polypeptides leave the ribosome through a tunnel in the LSU and interact with protein factors that function in enzymatic processing, targeting, and the membrane insertion of nascent chains at the exit of the ribosomal tunnel. The sequence is that of Small ribosomal subunit protein uS9 (rps-16) from Neurospora crassa (strain ATCC 24698 / 74-OR23-1A / CBS 708.71 / DSM 1257 / FGSC 987).